Here is a 580-residue protein sequence, read N- to C-terminus: Fumarate hydratase class I, aerobic (580 aa).

C105, C224, and C318 together coordinate [4Fe-4S] cluster.

It belongs to the class-I fumarase family. Homodimer. [4Fe-4S] cluster serves as cofactor.

The catalysed reaction is (S)-malate = fumarate + H2O. It catalyses the reaction oxaloacetate = enol-oxaloacetate. It participates in carbohydrate metabolism; tricarboxylic acid cycle; (S)-malate from fumarate: step 1/1. In terms of biological role, catalyzes the reversible hydration of fumarate to (S)-malate. Functions as an aerobic enzyme in the direction of malate formation as part of the citric acid cycle. Accounts for about 80% of the fumarase activity when the bacteria grow aerobically. To a lesser extent, also displays D-tartrate dehydratase activity in vitro, but is not able to convert (R)-malate, L-tartrate or meso-tartrate. Can also catalyze the isomerization of enol- to keto-oxaloacetate. In Salmonella typhimurium (strain LT2 / SGSC1412 / ATCC 700720), this protein is Fumarate hydratase class I, aerobic.